Reading from the N-terminus, the 368-residue chain is MYLKDSKIIVIKIGSSLLIDDKKKVRRKWLTEFAKDIQELIKQNKKVIIVSSGAIAMGCKKLNISKKNLKIDKSQAVASIGQIELMNLFSETFVKLKINISQILLTLEDTEQRRRALNAKRTFDNLFKLGFVPIVNENDTIATSEIKYGDNDRLASRVAQISGADSLILLSDVDGLYTHNPKIYKNAKLIKEIRNIDKDIEKIATKSISEHGTGGMKTKIDAAKICQLSGCQMVIANGLVNRPIKKITEENKCTWFLPKVSKLDARKKWIISSVSPKGALIIDDGAKQALSNGKSLLAAGIKKVSGRFSKGDHIKVLDKNNYECARGLSSFSSNEIEKIMGHHSKEIEKLLGYISKSEVIHKDDIVEV.

Lysine 12 contributes to the ATP binding site. Residues serine 52, aspartate 139, and asparagine 151 each contribute to the substrate site. ATP-binding positions include serine 171–aspartate 172 and threonine 213–lysine 219. The PUA domain maps to lysine 277–isoleucine 354.

This sequence belongs to the glutamate 5-kinase family.

Its subcellular location is the cytoplasm. It carries out the reaction L-glutamate + ATP = L-glutamyl 5-phosphate + ADP. It functions in the pathway amino-acid biosynthesis; L-proline biosynthesis; L-glutamate 5-semialdehyde from L-glutamate: step 1/2. In terms of biological role, catalyzes the transfer of a phosphate group to glutamate to form L-glutamate 5-phosphate. The protein is Glutamate 5-kinase of Pelagibacter ubique (strain HTCC1062).